Here is a 362-residue protein sequence, read N- to C-terminus: GDSL esterase/lipase At5g18430 (362 aa).

A signal peptide spans 1–19; it reads MTISTVIAFMSMFLVFVMS. Serine 35 acts as the Nucleophile in catalysis. N-linked (GlcNAc...) asparagine glycosylation occurs at asparagine 117. Catalysis depends on residues aspartate 327 and histidine 330. Asparagine 355 carries an N-linked (GlcNAc...) asparagine glycan.

Belongs to the 'GDSL' lipolytic enzyme family.

The protein resides in the secreted. The protein is GDSL esterase/lipase At5g18430 of Arabidopsis thaliana (Mouse-ear cress).